The chain runs to 358 residues: Methylthioribose-1-phosphate isomerase (358 aa).

Residues Arg54–Ala56, Arg96, and Gln205 contribute to the substrate site. The active-site Proton donor is Asp246. Asn256–Lys257 contacts substrate.

It belongs to the eIF-2B alpha/beta/delta subunits family. MtnA subfamily.

The enzyme catalyses 5-(methylsulfanyl)-alpha-D-ribose 1-phosphate = 5-(methylsulfanyl)-D-ribulose 1-phosphate. It participates in amino-acid biosynthesis; L-methionine biosynthesis via salvage pathway; L-methionine from S-methyl-5-thio-alpha-D-ribose 1-phosphate: step 1/6. Catalyzes the interconversion of methylthioribose-1-phosphate (MTR-1-P) into methylthioribulose-1-phosphate (MTRu-1-P). This Ectopseudomonas mendocina (strain ymp) (Pseudomonas mendocina) protein is Methylthioribose-1-phosphate isomerase.